An 886-amino-acid polypeptide reads, in one-letter code: General transcription factor 3C polypeptide 3 (886 aa).

Positions 1 to 121 are disordered; it reads MSGFSPELID…TPEQPTAGDV (121 aa). Ser2 is modified (N-acetylserine). Residues 12–44 are compositionally biased toward basic and acidic residues; it reads LEGKISFEEFERRREERKTREKKSLQEKGKLSA. The residue at position 43 (Ser43) is a Phosphoserine. The segment covering 53 to 63 has biased composition (polar residues); that stretch reads VPSSSGINSTK. Over residues 92-113 the composition is skewed to acidic residues; sequence ENEDDEEEEEEEEEEEEEEETP. 11 TPR repeats span residues 149 to 182, 183 to 216, 217 to 250, 252 to 284, 290 to 323, 326 to 361, 421 to 454, 456 to 489, 491 to 523, 733 to 766, and 811 to 844; these read LRGL…APLA, YEPF…NPSD, TEEW…EPTN, RYLW…LSPS, MQLA…HQGL, MEDV…EKKT, GDLY…ERYN, AVVW…APLH, DARI…DTLA, HALC…HPDE, and QESF…PPLV. At Ser282 the chain carries Phosphoserine.

As to quaternary structure, part of the TFIIIC subcomplex TFIIIC2, consisting of six subunits, GTF3C1, GTF3C2, GTF3C3, GTF3C4, GTF3C5 and GTF3C6. Interacts with BRF1 and TBP.

It localises to the nucleus. Functionally, involved in RNA polymerase III-mediated transcription. Integral, tightly associated component of the DNA-binding TFIIIC2 subcomplex that directly binds tRNA and virus-associated RNA promoters. This Homo sapiens (Human) protein is General transcription factor 3C polypeptide 3 (GTF3C3).